The sequence spans 212 residues: Imidazole glycerol phosphate synthase subunit HisH (212 aa).

The Glutamine amidotransferase type-1 domain maps to 2 to 212 (QTAIIDYGMG…LTMLKNFLNW (211 aa)). Cys85 (nucleophile) is an active-site residue. Active-site residues include His194 and Glu196.

Heterodimer of HisH and HisF.

It localises to the cytoplasm. It carries out the reaction 5-[(5-phospho-1-deoxy-D-ribulos-1-ylimino)methylamino]-1-(5-phospho-beta-D-ribosyl)imidazole-4-carboxamide + L-glutamine = D-erythro-1-(imidazol-4-yl)glycerol 3-phosphate + 5-amino-1-(5-phospho-beta-D-ribosyl)imidazole-4-carboxamide + L-glutamate + H(+). The enzyme catalyses L-glutamine + H2O = L-glutamate + NH4(+). Its pathway is amino-acid biosynthesis; L-histidine biosynthesis; L-histidine from 5-phospho-alpha-D-ribose 1-diphosphate: step 5/9. In terms of biological role, IGPS catalyzes the conversion of PRFAR and glutamine to IGP, AICAR and glutamate. The HisH subunit catalyzes the hydrolysis of glutamine to glutamate and ammonia as part of the synthesis of IGP and AICAR. The resulting ammonia molecule is channeled to the active site of HisF. The chain is Imidazole glycerol phosphate synthase subunit HisH from Neisseria gonorrhoeae (strain ATCC 700825 / FA 1090).